The primary structure comprises 693 residues: Zinc finger BED domain-containing protein 5 (693 aa).

A BED-type zinc finger spans residues 108 to 164 (RKYDESYLSFGFTYFGNRDAPHAQCVLCKKILSNSSLAPSKLRRHLETKHAAYKDKD). 4 residues coordinate Zn(2+): Cys-132, Cys-135, His-152, and His-157.

The polypeptide is Zinc finger BED domain-containing protein 5 (ZBED5) (Homo sapiens (Human)).